Reading from the N-terminus, the 312-residue chain is HPr kinase/phosphorylase (312 aa).

Active-site residues include H139 and K160. 154 to 161 (GSSGVGKS) contacts ATP. Residue S161 participates in Mg(2+) binding. The active-site Proton acceptor; for phosphorylation activity. Proton donor; for dephosphorylation activity is D178. The interval 202-211 (LEIRGLGIIN) is important for the catalytic mechanism of both phosphorylation and dephosphorylation. E203 is a binding site for Mg(2+). R244 is an active-site residue. The tract at residues 265-270 (PVRPGR) is important for the catalytic mechanism of dephosphorylation.

Belongs to the HPrK/P family. In terms of assembly, homohexamer. Mg(2+) serves as cofactor.

It catalyses the reaction [HPr protein]-L-serine + ATP = [HPr protein]-O-phospho-L-serine + ADP + H(+). The enzyme catalyses [HPr protein]-O-phospho-L-serine + phosphate + H(+) = [HPr protein]-L-serine + diphosphate. Catalyzes the ATP- as well as the pyrophosphate-dependent phosphorylation of a specific serine residue in HPr, a phosphocarrier protein of the phosphoenolpyruvate-dependent sugar phosphotransferase system (PTS). HprK/P also catalyzes the pyrophosphate-producing, inorganic phosphate-dependent dephosphorylation (phosphorolysis) of seryl-phosphorylated HPr (P-Ser-HPr). The two antagonistic activities of HprK/P are regulated by several intracellular metabolites, which change their concentration in response to the absence or presence of rapidly metabolisable carbon sources (glucose, fructose, etc.) in the growth medium. Therefore, by controlling the phosphorylation state of HPr, HPrK/P is a sensor enzyme that plays a major role in the regulation of carbon metabolism and sugar transport: it mediates carbon catabolite repression (CCR), and regulates PTS-catalyzed carbohydrate uptake and inducer exclusion. The protein is HPr kinase/phosphorylase of Listeria monocytogenes serotype 4b (strain CLIP80459).